Reading from the N-terminus, the 339-residue chain is Methionyl-tRNA formyltransferase (339 aa).

Position 110-113 (110-113 (SLLP)) interacts with (6S)-5,6,7,8-tetrahydrofolate.

It belongs to the Fmt family.

The enzyme catalyses L-methionyl-tRNA(fMet) + (6R)-10-formyltetrahydrofolate = N-formyl-L-methionyl-tRNA(fMet) + (6S)-5,6,7,8-tetrahydrofolate + H(+). In terms of biological role, attaches a formyl group to the free amino group of methionyl-tRNA(fMet). The formyl group appears to play a dual role in the initiator identity of N-formylmethionyl-tRNA by promoting its recognition by IF2 and preventing the misappropriation of this tRNA by the elongation apparatus. This Prochlorococcus marinus (strain MIT 9211) protein is Methionyl-tRNA formyltransferase.